A 235-amino-acid polypeptide reads, in one-letter code: Glucosamine-6-phosphate deaminase (235 aa).

The active-site Proton acceptor; for enolization step is the D62. N128 functions as the For ring-opening step in the catalytic mechanism. H130 acts as the Proton acceptor; for ring-opening step in catalysis. E135 functions as the For ring-opening step in the catalytic mechanism.

The protein belongs to the glucosamine/galactosamine-6-phosphate isomerase family. NagB subfamily.

The enzyme catalyses alpha-D-glucosamine 6-phosphate + H2O = beta-D-fructose 6-phosphate + NH4(+). It participates in amino-sugar metabolism; N-acetylneuraminate degradation; D-fructose 6-phosphate from N-acetylneuraminate: step 5/5. Its function is as follows. Catalyzes the reversible isomerization-deamination of glucosamine 6-phosphate (GlcN6P) to form fructose 6-phosphate (Fru6P) and ammonium ion. This chain is Glucosamine-6-phosphate deaminase, found in Streptococcus sanguinis (strain SK36).